A 1487-amino-acid chain; its full sequence is Major viral transcription factor (1487 aa).

Disordered stretches follow at residues 41 to 295, 310 to 371, 409 to 442, and 803 to 1007; these read AAPD…LPPG, LAKT…EEAP, REPL…SRDG, and PPTR…HTPR. Residues 66-75 are compositionally biased toward pro residues; sequence VIPPPSPAPE. 2 stretches are compositionally biased toward low complexity: residues 165-193 and 201-213; these read PSSA…SSSS and DGAG…SSSS. Positions 214 to 224 are enriched in acidic residues; it reads DDSDSDEGGEE. Positions 235–272 are enriched in low complexity; it reads AAKTPSAAGSPGPSSGGDRPAAGAATPKSCRSGAASPG. The segment covering 273–285 has biased composition (pro residues); sequence APAPAPASAPAPS. Composition is skewed to low complexity over residues 807 to 829, 849 to 860, and 867 to 877; these read SQQP…AEGS, PSSHSQSPQHSQ, and ATTATCCRATQ. Over residues 878–893 the composition is skewed to polar residues; sequence TNARSRGQQHQPQKAR. Positions 920–929 are enriched in basic residues; that stretch reads HGRPRGKSGK. The segment covering 938 to 951 has biased composition (low complexity); sequence AAQAGASASFSSSA. Residues 988 to 1007 show a composition bias toward basic and acidic residues; the sequence is GPDRRGGFRRVPRGDCHTPR.

It belongs to the herpesviridae ICP4 family. A long stretch of serine residues may be a major site of phosphorylation.

The protein resides in the host nucleus. This IE protein is a multifunctional protein capable of migrating to the nucleus, binding to DNA, trans-activating other viral genes, and autoregulating its own synthesis. The sequence is that of Major viral transcription factor (IE) from Equine herpesvirus 1 (strain Kentucky A) (EHV-1).